The chain runs to 391 residues: 4-hydroxy-3-methylbut-2-en-1-yl diphosphate synthase (flavodoxin) (391 aa).

[4Fe-4S] cluster-binding residues include Cys282, Cys285, Cys317, and Glu324.

This sequence belongs to the IspG family. [4Fe-4S] cluster serves as cofactor.

It catalyses the reaction (2E)-4-hydroxy-3-methylbut-2-enyl diphosphate + oxidized [flavodoxin] + H2O + 2 H(+) = 2-C-methyl-D-erythritol 2,4-cyclic diphosphate + reduced [flavodoxin]. The protein operates within isoprenoid biosynthesis; isopentenyl diphosphate biosynthesis via DXP pathway; isopentenyl diphosphate from 1-deoxy-D-xylulose 5-phosphate: step 5/6. Its function is as follows. Converts 2C-methyl-D-erythritol 2,4-cyclodiphosphate (ME-2,4cPP) into 1-hydroxy-2-methyl-2-(E)-butenyl 4-diphosphate. This is 4-hydroxy-3-methylbut-2-en-1-yl diphosphate synthase (flavodoxin) from Acidothermus cellulolyticus (strain ATCC 43068 / DSM 8971 / 11B).